A 334-amino-acid polypeptide reads, in one-letter code: Ribosomal RNA small subunit methyltransferase H (334 aa).

S-adenosyl-L-methionine-binding positions include 54–56 (GGH), Asp74, Phe100, Asp121, and Gln128. The interval 272-318 (RHSKGQYPEDENLPMPPKRPRYFSKPKRVGPSKAEISNNPRSRSAWL) is disordered. Over residues 289–301 (KRPRYFSKPKRVG) the composition is skewed to basic residues.

It belongs to the methyltransferase superfamily. RsmH family.

It is found in the cytoplasm. The catalysed reaction is cytidine(1402) in 16S rRNA + S-adenosyl-L-methionine = N(4)-methylcytidine(1402) in 16S rRNA + S-adenosyl-L-homocysteine + H(+). Functionally, specifically methylates the N4 position of cytidine in position 1402 (C1402) of 16S rRNA. This is Ribosomal RNA small subunit methyltransferase H from Psychrobacter arcticus (strain DSM 17307 / VKM B-2377 / 273-4).